Reading from the N-terminus, the 435-residue chain is Nicotinate phosphoribosyltransferase (435 aa).

At histidine 230 the chain carries Phosphohistidine; by autocatalysis.

It belongs to the NAPRTase family. Post-translationally, transiently phosphorylated on a His residue during the reaction cycle. Phosphorylation strongly increases the affinity for substrates and increases the rate of nicotinate D-ribonucleotide production. Dephosphorylation regenerates the low-affinity form of the enzyme, leading to product release.

It carries out the reaction nicotinate + 5-phospho-alpha-D-ribose 1-diphosphate + ATP + H2O = nicotinate beta-D-ribonucleotide + ADP + phosphate + diphosphate. It functions in the pathway cofactor biosynthesis; NAD(+) biosynthesis; nicotinate D-ribonucleotide from nicotinate: step 1/1. Its function is as follows. Catalyzes the synthesis of beta-nicotinate D-ribonucleotide from nicotinate and 5-phospho-D-ribose 1-phosphate at the expense of ATP. The protein is Nicotinate phosphoribosyltransferase of Vibrio cholerae serotype O1 (strain ATCC 39541 / Classical Ogawa 395 / O395).